The sequence spans 161 residues: Allophycocyanin alpha-B chain (161 aa).

Asn71 is subject to N4-methylasparagine. Cys81 is a (2R,3E)-phycocyanobilin binding site.

The protein belongs to the phycobiliprotein family. Post-translationally, contains one covalently linked bilin chromophore.

The protein localises to the plastid. Its subcellular location is the chloroplast thylakoid membrane. Its function is as follows. Allophycocyanin is a photosynthetic bile pigment-protein complex with maximum absorption at approximately 650 nanometers. The chain is Allophycocyanin alpha-B chain (apcD) from Pyropia yezoensis (Susabi-nori).